The chain runs to 335 residues: MKEILNALYHQKDLNDGEVKKLFTLIINEKVSPAQLGAVLCALKIKGESFKEISVAATTLLEHAPKPFDSGLDLIDNCGTGGDGLKTINISTIAALIASSMGLSMAKHGSRSVSSHSGSADLLENLGVNIEMNPTQLENCFKQTHFGFLFAPLYHQSFKKSAPLRKELFTKTIFNCLGPLINPLRPKIQLLGVYEKSLCKTMALALKALGVKRAMVVNGGGTDEIVLHDTTHACELKNNGILEYDLSAKDFDLPPYDLKELQIKNAQESVQACLDILENKGKDSHTMVVVANVASLLYLSHKAKDLKEGVGMTLEHLKTKVPYTHLQKIIRLSHA.

5-phospho-alpha-D-ribose 1-diphosphate contacts are provided by residues Gly79, 82–83, Thr87, 89–92, 107–115, and Ser119; these read GD, NIST, and KHGSRSVSS. Gly79 is a binding site for anthranilate. Ser91 contributes to the Mg(2+) binding site. Arg165 lines the anthranilate pocket. Positions 223 and 224 each coordinate Mg(2+).

This sequence belongs to the anthranilate phosphoribosyltransferase family. Homodimer. It depends on Mg(2+) as a cofactor.

It carries out the reaction N-(5-phospho-beta-D-ribosyl)anthranilate + diphosphate = 5-phospho-alpha-D-ribose 1-diphosphate + anthranilate. It participates in amino-acid biosynthesis; L-tryptophan biosynthesis; L-tryptophan from chorismate: step 2/5. Catalyzes the transfer of the phosphoribosyl group of 5-phosphorylribose-1-pyrophosphate (PRPP) to anthranilate to yield N-(5'-phosphoribosyl)-anthranilate (PRA). The sequence is that of Anthranilate phosphoribosyltransferase from Helicobacter pylori (strain Shi470).